Reading from the N-terminus, the 443-residue chain is Endonuclease CUE2 (443 aa).

CUE domains lie at 8–51 and 55–98; these read DHES…KEND and TVDN…NYET. A Smr domain is found at 347 to 443; it reads LDFHGFLPSE…YFRIEGKKKK (97 aa).

Its function is as follows. mRNA endonuclease involved in the No-Go Decay (NGD) pathway, which catalyzes mRNA cleavage and degradation in response to ribosome collisions. Acts downstream of the ribosome collision sensor HEL2. Specifically recognizes and binds RPS7/eS7 polyubiquitinated by MOT2/NOT4 and HEL2, promoting CUE2 recruitment to stalled ribosomes, where it mediates mRNA cleavage upstream of the colliding ribosome. Also mediates mRNA cleavage within colliding ribosomes: recruited to colliding ribosomes downstream of the RQT (ribosome quality control trigger) complex following disassembly of stalled ribosomes and cleaves mRNAs partially released from the colliding ribosome. This chain is Endonuclease CUE2, found in Saccharomyces cerevisiae (strain ATCC 204508 / S288c) (Baker's yeast).